The following is an 892-amino-acid chain: Translation initiation factor IF-2 (892 aa).

Residues 66–305 form a disordered region; that stretch reads TRSTLNIPGT…SLQQGFQKPA (240 aa). Positions 68–82 are enriched in polar residues; that stretch reads STLNIPGTGGKSKSV. Basic and acidic residues-rich tracts occupy residues 93–159 and 166–216; these read VKRD…KDKV and DMTK…EENK. Positions 254–269 are enriched in basic residues; that stretch reads GRGRNAKAARPAKKGK. Residues 270–282 are compositionally biased toward basic and acidic residues; that stretch reads HAESKADREEARA. The 170-residue stretch at 391–560 folds into the tr-type G domain; sequence PRAPVVTIMG…LLQAEVLELK (170 aa). The interval 400 to 407 is G1; it reads GHVDHGKT. 400–407 provides a ligand contact to GTP; the sequence is GHVDHGKT. The interval 425-429 is G2; it reads GITQH. Residues 446-449 form a G3 region; the sequence is DTPG. GTP-binding positions include 446–450 and 500–503; these read DTPGH and NKID. The interval 500-503 is G4; the sequence is NKID. The tract at residues 536 to 538 is G5; it reads SAK.

This sequence belongs to the TRAFAC class translation factor GTPase superfamily. Classic translation factor GTPase family. IF-2 subfamily.

The protein resides in the cytoplasm. One of the essential components for the initiation of protein synthesis. Protects formylmethionyl-tRNA from spontaneous hydrolysis and promotes its binding to the 30S ribosomal subunits. Also involved in the hydrolysis of GTP during the formation of the 70S ribosomal complex. This chain is Translation initiation factor IF-2, found in Salmonella typhi.